Consider the following 146-residue polypeptide: MKILVVNKKLHFNYEVLEKIEAGIELKGVEVKSIHLNNANISDSYVIFKRNEAYILNMNIAPYSHGNIYNVDPLRTRKLLLHKNEIIKYQMRIKKESLTMVPSKIYWRKNKLKVEIALAKGKKQFDKRQTIKDRDNSREARKHIRV.

The span at 127–139 (KRQTIKDRDNSRE) shows a compositional bias: basic and acidic residues. Positions 127-146 (KRQTIKDRDNSREARKHIRV) are disordered.

Belongs to the SmpB family.

It localises to the cytoplasm. Its function is as follows. Required for rescue of stalled ribosomes mediated by trans-translation. Binds to transfer-messenger RNA (tmRNA), required for stable association of tmRNA with ribosomes. tmRNA and SmpB together mimic tRNA shape, replacing the anticodon stem-loop with SmpB. tmRNA is encoded by the ssrA gene; the 2 termini fold to resemble tRNA(Ala) and it encodes a 'tag peptide', a short internal open reading frame. During trans-translation Ala-aminoacylated tmRNA acts like a tRNA, entering the A-site of stalled ribosomes, displacing the stalled mRNA. The ribosome then switches to translate the ORF on the tmRNA; the nascent peptide is terminated with the 'tag peptide' encoded by the tmRNA and targeted for degradation. The ribosome is freed to recommence translation, which seems to be the essential function of trans-translation. This is SsrA-binding protein from Malacoplasma penetrans (strain HF-2) (Mycoplasma penetrans).